The sequence spans 444 residues: Tubulin beta chain (444 aa).

Residues glutamine 11, glutamate 68, serine 137, glycine 141, threonine 142, glycine 143, asparagine 203, and asparagine 225 each coordinate GTP. Mg(2+) is bound at residue glutamate 68. The segment at 424–444 (QDATAEEEGEFDEDEEMDEMM) is disordered. The segment covering 427–444 (TAEEEGEFDEDEEMDEMM) has biased composition (acidic residues).

It belongs to the tubulin family. As to quaternary structure, dimer of alpha and beta chains. A typical microtubule is a hollow water-filled tube with an outer diameter of 25 nm and an inner diameter of 15 nM. Alpha-beta heterodimers associate head-to-tail to form protofilaments running lengthwise along the microtubule wall with the beta-tubulin subunit facing the microtubule plus end conferring a structural polarity. Microtubules usually have 13 protofilaments but different protofilament numbers can be found in some organisms and specialized cells. Requires Mg(2+) as cofactor.

Its subcellular location is the cytoplasm. It localises to the cytoskeleton. Functionally, tubulin is the major constituent of microtubules, a cylinder consisting of laterally associated linear protofilaments composed of alpha- and beta-tubulin heterodimers. Microtubules grow by the addition of GTP-tubulin dimers to the microtubule end, where a stabilizing cap forms. Below the cap, tubulin dimers are in GDP-bound state, owing to GTPase activity of alpha-tubulin. In Achlya klebsiana, this protein is Tubulin beta chain.